A 671-amino-acid polypeptide reads, in one-letter code: DNA ligase (671 aa).

NAD(+)-binding positions include 32–36, 81–82, and glutamate 113; these read DAEYD and SL. Lysine 115 serves as the catalytic N6-AMP-lysine intermediate. NAD(+)-binding residues include arginine 136, glutamate 173, lysine 290, and lysine 314. Positions 408, 411, 426, and 432 each coordinate Zn(2+). Positions 593 to 671 constitute a BRCT domain; it reads EIDSPFAGKT…EAEMIRLLGA (79 aa).

It belongs to the NAD-dependent DNA ligase family. LigA subfamily. The cofactor is Mg(2+). It depends on Mn(2+) as a cofactor.

It carries out the reaction NAD(+) + (deoxyribonucleotide)n-3'-hydroxyl + 5'-phospho-(deoxyribonucleotide)m = (deoxyribonucleotide)n+m + AMP + beta-nicotinamide D-nucleotide.. DNA ligase that catalyzes the formation of phosphodiester linkages between 5'-phosphoryl and 3'-hydroxyl groups in double-stranded DNA using NAD as a coenzyme and as the energy source for the reaction. It is essential for DNA replication and repair of damaged DNA. This Salmonella paratyphi B (strain ATCC BAA-1250 / SPB7) protein is DNA ligase.